Consider the following 248-residue polypeptide: Transcription factor Spi-C (248 aa).

Residues 111-194 (LRLFEYLHES…IRRKLTYQFS (84 aa)) constitute a DNA-binding region (ETS).

Belongs to the ETS family. Binds DNA as a monomer.

It localises to the nucleus. In terms of biological role, controls the development of red pulp macrophages required for red blood cells recycling and iron homeostasis. Transcription factor that binds to the PU-box, a purine-rich DNA sequence (5'-GAGGA[AT]-3') that can act as a lymphoid-specific enhancer. Regulates VCAM1 gene expression. The protein is Transcription factor Spi-C (SPIC) of Bos taurus (Bovine).